A 299-amino-acid polypeptide reads, in one-letter code: Myozenin-1 (299 aa).

The interval 1 to 34 (MPLSGTPAPNKKRKSSKLIMELTGGGQESSGLNL) is disordered. Residue Ser82 is modified to Phosphoserine. Positions 102 to 174 (GQGFSYSKSN…TGSGDQAGGE (73 aa)) are disordered. Composition is skewed to gly residues over residues 112–125 (GRGGSQAGGSGSAG) and 137–173 (SGSGAGGTGGPAGQAGRGGAAGTAGVGETGSGDQAGG).

Belongs to the myozenin family. In terms of assembly, interacts with ACTN2, ACTN3, FLNA, FLNB, FLNC, LDB3, PPP3CA and TCAP. Interacts via its C-terminal region with MYOT. Expressed primarily in skeletal muscle. Detected at lower levels in heart, prostate and pancreas.

The protein localises to the nucleus. Its subcellular location is the cell projection. It localises to the pseudopodium. Functionally, myozenins may serve as intracellular binding proteins involved in linking Z-disk proteins such as alpha-actinin, gamma-filamin, TCAP/telethonin, LDB3/ZASP and localizing calcineurin signaling to the sarcomere. Plays an important role in the modulation of calcineurin signaling. May play a role in myofibrillogenesis. The polypeptide is Myozenin-1 (Homo sapiens (Human)).